The following is a 45-amino-acid chain: Large ribosomal subunit protein bL34 (45 aa).

It belongs to the bacterial ribosomal protein bL34 family.

This is Large ribosomal subunit protein bL34 from Kineococcus radiotolerans (strain ATCC BAA-149 / DSM 14245 / SRS30216).